The sequence spans 52 residues: uncharacterized protein (52 aa).

This is an uncharacterized protein from Homo sapiens (Human).